Reading from the N-terminus, the 488-residue chain is Glutamate--tRNA ligase (488 aa).

A 'HIGH' region motif is present at residues 16-26 (PSPTGEPHVGT). The 'KMSKS' region motif lies at 257–261 (KLSKR). Residue Lys260 participates in ATP binding.

The protein belongs to the class-I aminoacyl-tRNA synthetase family. Glutamate--tRNA ligase type 1 subfamily. Monomer.

It localises to the cytoplasm. It catalyses the reaction tRNA(Glu) + L-glutamate + ATP = L-glutamyl-tRNA(Glu) + AMP + diphosphate. Its function is as follows. Catalyzes the attachment of glutamate to tRNA(Glu) in a two-step reaction: glutamate is first activated by ATP to form Glu-AMP and then transferred to the acceptor end of tRNA(Glu). This Rhizobium johnstonii (strain DSM 114642 / LMG 32736 / 3841) (Rhizobium leguminosarum bv. viciae) protein is Glutamate--tRNA ligase.